The sequence spans 422 residues: Interferon-induced protein 44 (422 aa).

Positions 1-147 constitute a TLDc domain; the sequence is MAMRTRLTWQ…IQECEAFRCE (147 aa).

The protein belongs to the IFI44 family.

Its subcellular location is the cytoplasm. Its function is as follows. This protein aggregates to form microtubular structures. The protein is Interferon-induced protein 44 (Ifi44) of Mus musculus (Mouse).